Reading from the N-terminus, the 462-residue chain is Fumarate hydratase class II (462 aa).

Substrate-binding positions include 97–99 (SGT), 127–130 (HPND), 137–139 (SSN), and Thr-185. His-186 serves as the catalytic Proton donor/acceptor. Ser-316 is a catalytic residue. Residues Ser-317 and 322-324 (KVN) contribute to the substrate site.

This sequence belongs to the class-II fumarase/aspartase family. Fumarase subfamily. As to quaternary structure, homotetramer.

Its subcellular location is the cytoplasm. The enzyme catalyses (S)-malate = fumarate + H2O. It participates in carbohydrate metabolism; tricarboxylic acid cycle; (S)-malate from fumarate: step 1/1. In terms of biological role, involved in the TCA cycle. Catalyzes the stereospecific interconversion of fumarate to L-malate. This Bacillus cereus (strain ATCC 14579 / DSM 31 / CCUG 7414 / JCM 2152 / NBRC 15305 / NCIMB 9373 / NCTC 2599 / NRRL B-3711) protein is Fumarate hydratase class II.